Reading from the N-terminus, the 735-residue chain is Receptor-type guanylate cyclase gcy-27 (735 aa).

N-linked (GlcNAc...) asparagine glycosylation occurs at N11. A helical membrane pass occupies residues 28–48; the sequence is FIICTLPVPIYFVVVAIWTIN. Residues 188–465 form the Protein kinase domain; the sequence is ALTSRRRVFG…IENLRNAIAI (278 aa). In terms of domain architecture, Guanylate cyclase spans 538–668; that stretch reads TVMFVQICDF…DTVNFASRMQ (131 aa).

This sequence belongs to the adenylyl cyclase class-4/guanylyl cyclase family. As to expression, expressed bilaterally in ASK, ASI and ASJ sensory neurons.

The protein resides in the cell membrane. It catalyses the reaction GTP = 3',5'-cyclic GMP + diphosphate. Functionally, guanylate cyclase involved in the production of the second messenger cGMP. May be involved in sensitivity to quinine by regulating egl-4 activity through the production of cGMP. Promotes the calcium flux to the cytoplasm in ASJ sensory neurons upon removal of a nitric oxide (NO) stimulus and is thereby involved in the behavioral avoidance response to NO-producing organisms like P.aeruginosa. The sequence is that of Receptor-type guanylate cyclase gcy-27 from Caenorhabditis elegans.